A 196-amino-acid chain; its full sequence is Large ribosomal subunit protein bL20 (196 aa).

The protein belongs to the bacterial ribosomal protein bL20 family.

Binds directly to 23S ribosomal RNA and is necessary for the in vitro assembly process of the 50S ribosomal subunit. It is not involved in the protein synthesizing functions of that subunit. The chain is Large ribosomal subunit protein bL20 (rplT) from Oenococcus oeni (strain ATCC BAA-331 / PSU-1).